Reading from the N-terminus, the 110-residue chain is Large ribosomal subunit protein uL22 (110 aa).

The segment covering 84–95 has biased composition (basic residues); that stretch reads ARGTASKIRKPT. The tract at residues 84–110 is disordered; sequence ARGTASKIRKPTSHVMVEVSKPEKKEA.

The protein belongs to the universal ribosomal protein uL22 family. Part of the 50S ribosomal subunit.

This protein binds specifically to 23S rRNA; its binding is stimulated by other ribosomal proteins, e.g. L4, L17, and L20. It is important during the early stages of 50S assembly. It makes multiple contacts with different domains of the 23S rRNA in the assembled 50S subunit and ribosome. In terms of biological role, the globular domain of the protein is located near the polypeptide exit tunnel on the outside of the subunit, while an extended beta-hairpin is found that lines the wall of the exit tunnel in the center of the 70S ribosome. This chain is Large ribosomal subunit protein uL22, found in Campylobacter concisus (strain 13826).